Consider the following 116-residue polypeptide: Large ribosomal subunit protein bL17 (116 aa).

The protein belongs to the bacterial ribosomal protein bL17 family. In terms of assembly, part of the 50S ribosomal subunit. Contacts protein L32.

This chain is Large ribosomal subunit protein bL17, found in Chloroflexus aurantiacus (strain ATCC 29366 / DSM 635 / J-10-fl).